The sequence spans 176 residues: RING-H2 finger protein ATL73 (176 aa).

Positions 1–16 (MARFLLATQATPTISA) are cleaved as a signal peptide. The chain crosses the membrane as a helical span at residues 42–62 (VIILAALLCALICALGINSVL). The segment at 113–155 (CLICLGDFVEGETVRVLPKCNHGFHVKCIDTWLLSHSSCPTCR) adopts an RING-type; atypical zinc-finger fold.

Belongs to the RING-type zinc finger family. ATL subfamily.

The protein resides in the membrane. The catalysed reaction is S-ubiquitinyl-[E2 ubiquitin-conjugating enzyme]-L-cysteine + [acceptor protein]-L-lysine = [E2 ubiquitin-conjugating enzyme]-L-cysteine + N(6)-ubiquitinyl-[acceptor protein]-L-lysine.. It functions in the pathway protein modification; protein ubiquitination. The chain is RING-H2 finger protein ATL73 (ATL73) from Arabidopsis thaliana (Mouse-ear cress).